The following is a 464-amino-acid chain: Putative F-box/LRR-repeat protein At3g59160 (464 aa).

The 49-residue stretch at 12 to 60 folds into the F-box domain; it reads KDMINDLPDALLCHVLSYLTTKEAASTSLLSRRWRYLLAFVPNLEFDDS. 6 LRR repeats span residues 172–198, 200–225, 233–258, 336–367, 368–393, and 408–433; these read TLKIRDGPPIDVKHVHLPKLKTLHLES, MFDEEDIGFSKLLSGCPELEELVLHH, SCSVSVATLKRLTFCCNNMKFCGMHE, VLCLSADTLEVLTYCCKQIPIFNNLTHVTIQS, TPKVGWKSLLKLLKNSPKLQTLVFQG, and KIEKQIEKVKHFLETMPHLEQLVLHY.

The sequence is that of Putative F-box/LRR-repeat protein At3g59160 from Arabidopsis thaliana (Mouse-ear cress).